Consider the following 412-residue polypeptide: Nuclear hormone receptor family member nhr-61 (412 aa).

Over residues 1–19 (MIVDSISSSTASTSSSSPT) the composition is skewed to low complexity. The disordered stretch occupies residues 1 to 23 (MIVDSISSSTASTSSSSPTRGTP). A DNA-binding region (nuclear receptor) is located at residues 27 to 102 (SLQCAVCGDV…VGMNPRAVQG (76 aa)). 2 NR C4-type zinc fingers span residues 30–50 (CAVC…CNGC) and 66–90 (CRHG…LTRC). The NR LBD domain occupies 144-407 (KKEQIIDNLR…DWSQELRDHR (264 aa)).

Belongs to the nuclear hormone receptor family.

Its subcellular location is the nucleus. In terms of biological role, orphan nuclear receptor. The polypeptide is Nuclear hormone receptor family member nhr-61 (nhr-61) (Caenorhabditis elegans).